The sequence spans 254 residues: L-rhamnose 1-dehydrogenase (NADP(+)) (254 aa).

Residues Gly-13, Ser-15, Arg-16, Ile-18, Asp-64, and Asn-91 each coordinate NADP(+). Ser-144 (proton donor) is an active-site residue. Residues Ser-144, Ser-146, Gln-154, and Tyr-157 each coordinate beta-L-rhamnose. The NADP(+) site is built by Tyr-157 and Lys-161. Tyr-157 (proton acceptor) is an active-site residue. The active-site Lowers pKa of active site Tyr is the Lys-161. Residue Thr-189 coordinates beta-L-rhamnose. Ile-190 lines the NADP(+) pocket. A beta-L-rhamnose-binding site is contributed by Asn-195.

The protein belongs to the short-chain dehydrogenases/reductases (SDR) family.

It carries out the reaction L-rhamnofuranose + NADP(+) = L-rhamnono-1,4-lactone + NADPH + H(+). Its pathway is carbohydrate degradation; L-rhamnose degradation. Its function is as follows. Involved in the non-phosphorylated metabolic pathway of L-rhamnose catabolism. Catalyzes the oxidation of L-rhamnose to yield L-rhamnono-1,4-lactone. It can also oxidize L-lyxose and L-mannose, and uses only NADP. This chain is L-rhamnose 1-dehydrogenase (NADP(+)), found in Thermoplasma acidophilum (strain ATCC 25905 / DSM 1728 / JCM 9062 / NBRC 15155 / AMRC-C165).